The sequence spans 545 residues: Chaperonin GroEL (545 aa).

Residues 30-33 (TLGP), Lys51, 87-91 (DGTTT), Gly415, 479-481 (NAA), and Asp495 contribute to the ATP site.

Belongs to the chaperonin (HSP60) family. In terms of assembly, forms a cylinder of 14 subunits composed of two heptameric rings stacked back-to-back. Interacts with the co-chaperonin GroES.

It localises to the cytoplasm. The catalysed reaction is ATP + H2O + a folded polypeptide = ADP + phosphate + an unfolded polypeptide.. Its function is as follows. Together with its co-chaperonin GroES, plays an essential role in assisting protein folding. The GroEL-GroES system forms a nano-cage that allows encapsulation of the non-native substrate proteins and provides a physical environment optimized to promote and accelerate protein folding. This Salmonella agona (strain SL483) protein is Chaperonin GroEL.